Here is a 367-residue protein sequence, read N- to C-terminus: Methionine aminopeptidase 1 (367 aa).

A C6H2-type zinc finger spans residues 3 to 57 (GILCASPGCGKPAKLQCPTCVNLKLETPSHFCSQECFKTFWPLHKMYHQKGQPEN). Residues Cys6, Cys11, Cys19, Cys22, Cys34, Cys38, His46, and His50 each coordinate Zn(2+). Residue His185 participates in a protein binding. Positions 202, 213, and 276 each coordinate Zn(2+). His283 serves as a coordination point for a protein. Zn(2+) contacts are provided by Glu309 and Glu340.

The protein belongs to the peptidase M24A family. Methionine aminopeptidase type 1 subfamily. In terms of assembly, associates with the 60S ribosomal subunit of the 80S translational complex. It depends on Zn(2+) as a cofactor. The cofactor is Co(2+). Mn(2+) serves as cofactor. Requires Fe(2+) as cofactor.

The protein resides in the cytoplasm. It catalyses the reaction Release of N-terminal amino acids, preferentially methionine, from peptides and arylamides.. In terms of biological role, cotranslationally removes the N-terminal methionine from nascent proteins. The N-terminal methionine is often cleaved when the second residue in the primary sequence is small and uncharged (Met-Ala-, Cys, Gly, Pro, Ser, Thr, or Val). The sequence is that of Methionine aminopeptidase 1 (metap1) from Dictyostelium discoideum (Social amoeba).